The following is a 250-amino-acid chain: Sperm-egg fusion protein Juno (250 aa).

An N-terminal signal peptide occupies residues 1–19; the sequence is MACWWPLLLELWTVMPTWA. 8 cysteine pairs are disulfide-bonded: Cys-27–Cys-55, Cys-47–Cys-95, Cys-56–Cys-99, Cys-79–Cys-172, Cys-86–Cys-143, Cys-132–Cys-206, Cys-136–Cys-186, and Cys-149–Cys-166. The segment at 62-81 is important for interaction with IZUMO1; sequence WEAHLDVSPLYNFSLFHCGL. Asn-73 carries an N-linked (GlcNAc...) asparagine glycan. A lipid anchor (GPI-anchor amidated serine) is attached at Ser-228. Residues 229-250 constitute a propeptide that is removed on maturation; that stretch reads SAPSWELSYTIMVCSLFLPFLS.

Belongs to the folate receptor family. Monomer. Interacts with IZUMO1; the interaction is direct. IZUMO1 and IZUMO1R/JUNO form a complex with 1:1 stoichiometry. Interacts with FCRL3/MAIA; FCRL3/MAIA replaces IZUMO1R/JUNO as IZUMO1 receptor after sperm-egg adhesion, thereby permitting species-specific gamete fusion. Interacts with WDR54. The protein is rapidly cleaved following fertilization, being only weakly detectable in zona-intact fertilized eggs at telophase II and undetectable at the pronuclear stage. Sheding is probably required to block to polyspermy and ensuring egg fusion with a single sperm. In terms of tissue distribution, expressed in unfertilized oocytes (at protein level).

The protein resides in the cell membrane. The protein localises to the cell projection. It localises to the microvillus membrane. Functionally, receptor for IZUMO1 present at the cell surface of oocytes (oolemma), which is essential for species-specific gamete recognition and fertilization. The IZUMO1:IZUMO1R/JUNO interaction is a necessary adhesion event between sperm and egg that is required for fertilization but is not sufficient for cell fusion. The ligand-receptor interaction probably does not act as a membrane 'fusogen'. Does not bind folate. In Homo sapiens (Human), this protein is Sperm-egg fusion protein Juno.